The following is a 98-amino-acid chain: Small ribosomal subunit protein bS16 (98 aa).

The protein belongs to the bacterial ribosomal protein bS16 family.

This is Small ribosomal subunit protein bS16 from Pseudothermotoga lettingae (strain ATCC BAA-301 / DSM 14385 / NBRC 107922 / TMO) (Thermotoga lettingae).